An 86-amino-acid polypeptide reads, in one-letter code: Neurotoxin LmNaTx17 (86 aa).

An N-terminal signal peptide occupies residues 1–18 (MKILFVIVLAAFFIGVHC). Residues 19–85 (KHGYPVQYSG…TWDYKTGKCR (67 aa)) enclose the LCN-type CS-alpha/beta domain. Disulfide bonds link cysteine 33–cysteine 84, cysteine 37–cysteine 58, cysteine 44–cysteine 65, and cysteine 48–cysteine 67.

This sequence belongs to the long (4 C-C) scorpion toxin superfamily. Sodium channel inhibitor family. Beta subfamily. As to expression, expressed by the venom gland.

It localises to the secreted. Its function is as follows. Binds voltage-independently at site-4 of sodium channels (Nav) and shift the voltage of activation toward more negative potentials thereby affecting sodium channel activation and promoting spontaneous and repetitive firing. This chain is Neurotoxin LmNaTx17, found in Lychas mucronatus (Chinese swimming scorpion).